The sequence spans 414 residues: Serine hydroxymethyltransferase (414 aa).

(6S)-5,6,7,8-tetrahydrofolate-binding positions include L121 and G125–L127. K229 bears the N6-(pyridoxal phosphate)lysine mark.

Belongs to the SHMT family. Homodimer. It depends on pyridoxal 5'-phosphate as a cofactor.

It is found in the cytoplasm. The catalysed reaction is (6R)-5,10-methylene-5,6,7,8-tetrahydrofolate + glycine + H2O = (6S)-5,6,7,8-tetrahydrofolate + L-serine. It participates in one-carbon metabolism; tetrahydrofolate interconversion. It functions in the pathway amino-acid biosynthesis; glycine biosynthesis; glycine from L-serine: step 1/1. Catalyzes the reversible interconversion of serine and glycine with tetrahydrofolate (THF) serving as the one-carbon carrier. This reaction serves as the major source of one-carbon groups required for the biosynthesis of purines, thymidylate, methionine, and other important biomolecules. Also exhibits THF-independent aldolase activity toward beta-hydroxyamino acids, producing glycine and aldehydes, via a retro-aldol mechanism. This is Serine hydroxymethyltransferase from Verminephrobacter eiseniae (strain EF01-2).